The following is a 100-amino-acid chain: NADH-quinone oxidoreductase subunit K 2 (100 aa).

3 helical membrane-spanning segments follow: residues 4 to 24 (LHSY…GVLI), 29 to 49 (IVIF…FIAL), and 60 to 80 (IFVF…LALM).

Belongs to the complex I subunit 4L family. In terms of assembly, NDH-1 is composed of 14 different subunits. Subunits NuoA, H, J, K, L, M, N constitute the membrane sector of the complex.

The protein localises to the cell inner membrane. The enzyme catalyses a quinone + NADH + 5 H(+)(in) = a quinol + NAD(+) + 4 H(+)(out). NDH-1 shuttles electrons from NADH, via FMN and iron-sulfur (Fe-S) centers, to quinones in the respiratory chain. The immediate electron acceptor for the enzyme in this species is believed to be ubiquinone. Couples the redox reaction to proton translocation (for every two electrons transferred, four hydrogen ions are translocated across the cytoplasmic membrane), and thus conserves the redox energy in a proton gradient. In Geobacter metallireducens (strain ATCC 53774 / DSM 7210 / GS-15), this protein is NADH-quinone oxidoreductase subunit K 2.